A 539-amino-acid polypeptide reads, in one-letter code: Phosphoenolpyruvate carboxykinase (ATP) (539 aa).

The substrate site is built by R64, Y206, and K212. Residues K212, H231, and 247–255 (GLSGTGKTT) each bind ATP. K212 and H231 together coordinate Mn(2+). Residue D268 participates in Mn(2+) binding. Residues E296, R332, 448 to 449 (RI), and T454 each bind ATP. Position 332 (R332) interacts with substrate.

The protein belongs to the phosphoenolpyruvate carboxykinase (ATP) family. In terms of assembly, monomer. Mn(2+) serves as cofactor.

It is found in the cytoplasm. The catalysed reaction is oxaloacetate + ATP = phosphoenolpyruvate + ADP + CO2. The protein operates within carbohydrate biosynthesis; gluconeogenesis. Its function is as follows. Involved in the gluconeogenesis. Catalyzes the conversion of oxaloacetate (OAA) to phosphoenolpyruvate (PEP) through direct phosphoryl transfer between the nucleoside triphosphate and OAA. The protein is Phosphoenolpyruvate carboxykinase (ATP) of Cronobacter sakazakii (strain ATCC BAA-894) (Enterobacter sakazakii).